The primary structure comprises 120 residues: Membrane-anchored ubiquitin-fold protein 5 (120 aa).

A Ubiquitin-like domain is found at 7 to 72; that stretch reads IELKFRLADG…ILENNKTLSE (66 aa). A lipid anchor (S-palmitoyl cysteine) is attached at Cys-115. Position 117 is a cysteine methyl ester (Cys-117). Cys-117 carries S-geranylgeranyl cysteine lipidation. Residues 118-120 constitute a propeptide, removed in mature form; sequence CIL.

Ubiquitous.

The protein localises to the cell membrane. May serve as docking site to facilitate the association of other proteins to the plasma membrane. The polypeptide is Membrane-anchored ubiquitin-fold protein 5 (MUB5) (Arabidopsis thaliana (Mouse-ear cress)).